Here is a 544-residue protein sequence, read N- to C-terminus: WD repeat-containing protein 25 (544 aa).

2 disordered regions span residues 17–74 and 183–208; these read DSDS…EDPG and QRQALSTETGKGKDVEPQGPPAGRAP. Residues 30–39 are compositionally biased toward polar residues; sequence FNATGQQKDT. WD repeat units lie at residues 244–286, 290–329, 330–373, 375–420, 424–463, 469–510, and 513–544; these read GHRG…HCLQ, LHTEAVRAARWAPCGRRILSGGFDFALHLTDLETGTQLFS, GRSD…RSYK, TIQQ…KISN, HERFTCPSLALHPREPVFLAQTNGNYLALFSTVWPYRMSR, GHKV…RACT, and GHTQACVGTTYHPVLPSVLATCSWGGDMKIWH.

In terms of tissue distribution, expressed in heart, muscle, testis, ovary, uterus and prostate.

The sequence is that of WD repeat-containing protein 25 from Homo sapiens (Human).